Reading from the N-terminus, the 556-residue chain is Formate--tetrahydrofolate ligase (556 aa).

65 to 72 is an ATP binding site; that stretch reads TPAGEGKT.

The protein belongs to the formate--tetrahydrofolate ligase family.

It catalyses the reaction (6S)-5,6,7,8-tetrahydrofolate + formate + ATP = (6R)-10-formyltetrahydrofolate + ADP + phosphate. The protein operates within one-carbon metabolism; tetrahydrofolate interconversion. The protein is Formate--tetrahydrofolate ligase of Lachnoclostridium phytofermentans (strain ATCC 700394 / DSM 18823 / ISDg) (Clostridium phytofermentans).